We begin with the raw amino-acid sequence, 701 residues long: Cytosolic endo-beta-N-acetylglucosaminidase 2 (701 aa).

Belongs to the glycosyl hydrolase 85 family.

The protein resides in the cytoplasm. The protein localises to the cytosol. It catalyses the reaction an N(4)-(oligosaccharide-(1-&gt;3)-[oligosaccharide-(1-&gt;6)]-beta-D-Man-(1-&gt;4)-beta-D-GlcNAc-(1-&gt;4)-alpha-D-GlcNAc)-L-asparaginyl-[protein] + H2O = an oligosaccharide-(1-&gt;3)-[oligosaccharide-(1-&gt;6)]-beta-D-Man-(1-&gt;4)-D-GlcNAc + N(4)-(N-acetyl-beta-D-glucosaminyl)-L-asparaginyl-[protein]. Functionally, endoglycosidase that releases N-glycans from glycoproteins by cleaving the beta-1,4-glycosidic bond in the N,N'-diacetylchitobiose core. Involved in the production of high-mannose type N-glycans during plant development and fruit maturation. This is Cytosolic endo-beta-N-acetylglucosaminidase 2 from Arabidopsis thaliana (Mouse-ear cress).